The chain runs to 951 residues: Cation channel sperm-associated auxiliary subunit epsilon (951 aa).

Positions 1–19 (MSAREVAVLLLWLSCYGSA) are cleaved as a signal peptide. The Extracellular segment spans residues 20–903 (LWRYSTNSPN…ETFGLIPSPS (884 aa)). Intrachain disulfides connect C57–C71, C101–C206, C246–C336, and C410–C413. N-linked (GlcNAc...) asparagine glycosylation is found at N61 and N114. 5 N-linked (GlcNAc...) asparagine glycosylation sites follow: N414, N472, N487, N493, and N535. 4 disulfides stabilise this stretch: C583–C690, C703–C885, C719–C752, and C804–C835. Residue N796 is glycosylated (N-linked (GlcNAc...) asparagine). 3 N-linked (GlcNAc...) asparagine glycosylation sites follow: N854, N881, and N886. Residues 904-924 (VYLVASFLFVLMLLFFTILVL) form a helical membrane-spanning segment. Residues 925-951 (SYFRYMRIYRRYIYEPLHKPQRKRKKN) lie on the Cytoplasmic side of the membrane.

This sequence belongs to the CATSPERD family. As to quaternary structure, component of the CatSper complex or CatSpermasome composed of the core pore-forming members CATSPER1, CATSPER2, CATSPER3 and CATSPER4 as well as auxiliary members CATSPERB, CATSPERG, CATSPERD, CATSPERE, CATSPERZ, C2CD6/CATSPERT, TMEM249, TMEM262 and EFCAB9. HSPA1 may be an additional auxiliary complex member. The core complex members CATSPER1, CATSPER2, CATSPER3 and CATSPER4 form a heterotetrameric channel. The auxiliary CATSPERB, CATSPERG, CATSPERD and CATSPERE subunits form a pavilion-like structure over the pore which stabilizes the complex through interactions with CATSPER4, CATSPER3, CATSPER1 and CATSPER2 respectively. TMEM262/CATSPERH interacts with CATSPERB, further stabilizing the complex. C2CD6/CATSPERT interacts at least with CATSPERD and is required for targeting the CatSper complex in the flagellar membrane.

The protein localises to the cell projection. It is found in the cilium. Its subcellular location is the flagellum membrane. Functionally, auxiliary component of the CatSper complex, a complex involved in sperm cell hyperactivation. Sperm cell hyperactivation is needed for sperm motility which is essential late in the preparation of sperm for fertilization. This is Cation channel sperm-associated auxiliary subunit epsilon from Homo sapiens (Human).